The primary structure comprises 82 residues: MGSLSIWHWLIVGAVVLLVFGGKGKISDIMGDVAKGIKSFKRGLSEDEEKAEAKPVGEPSLRSLDHQGAGDPLKTPDARKIG.

Residues 1-21 (MGSLSIWHWLIVGAVVLLVFG) form a helical membrane-spanning segment. The segment at 43 to 82 (GLSEDEEKAEAKPVGEPSLRSLDHQGAGDPLKTPDARKIG) is disordered.

The protein belongs to the TatA/E family. The Tat system comprises two distinct complexes: a TatABC complex, containing multiple copies of TatA, TatB and TatC subunits, and a separate TatA complex, containing only TatA subunits. Substrates initially bind to the TatABC complex, which probably triggers association of the separate TatA complex to form the active translocon.

The protein resides in the cell inner membrane. Its function is as follows. Part of the twin-arginine translocation (Tat) system that transports large folded proteins containing a characteristic twin-arginine motif in their signal peptide across membranes. TatA could form the protein-conducting channel of the Tat system. The protein is Sec-independent protein translocase protein TatA of Methylocella silvestris (strain DSM 15510 / CIP 108128 / LMG 27833 / NCIMB 13906 / BL2).